A 341-amino-acid polypeptide reads, in one-letter code: Processive diacylglycerol beta-glycosyltransferase (341 aa).

Belongs to the glycosyltransferase 2 family. It depends on Mg(2+) as a cofactor.

The protein resides in the cell membrane. The enzyme catalyses a 1,2-diacyl-sn-glycerol + UDP-alpha-D-glucose = a 1,2-diacyl-3-O-(beta-D-glucopyranosyl)-sn-glycerol + UDP + H(+). It catalyses the reaction a 1,2-diacyl-sn-glycerol + UDP-alpha-D-galactose = a 1,2-diacyl-3-O-(beta-D-galactosyl)-sn-glycerol + UDP + H(+). The catalysed reaction is a 1,2-diacyl-3-O-(beta-D-galactosyl)-sn-glycerol + UDP-alpha-D-glucose = a 1,2-diacyl-3-O-[beta-D-glucopyranosyl-(1-&gt;6)-beta-D-galactopyranosyl]-sn-glycerol + UDP + H(+). It carries out the reaction a 1,2-diacyl-3-O-(beta-D-galactosyl)-sn-glycerol + UDP-alpha-D-galactose = a 1,2-diacyl-3-O-[beta-D-galactosyl-(1-&gt;6)-beta-D-galactosyl]-sn-glycerol + UDP + H(+). Activated by the negatively charged lipid phosphatidylglycerol (PG). Processive glycosyltransferase involved in the biosynthesis of both the non-bilayer-prone beta-monoglycosyldiacylglycerol and the bilayer-forming membrane lipid glucosyl-galactosyldiacylglycerol and digalactosyl-diacylglycerol. These components contribute to regulate the properties and stability of the membrane. Catalyzes sequentially the transfers of glucosyl or galactosyl residues from UDP-Glc or UDP-Gal to diacylglycerol (DAG) acceptor to form the corresponding beta-glycosyl-DAG (3-O-(beta-D-glycopyranosyl)-1,2-diacyl-sn-glycerol). Then, only beta-galactosyl-DAG (3-O-(beta-D-galactopyranosyl)-1,2-diacyl-sn-glycerol) can act as acceptor to give the beta-glycosyl-beta-galactosyl-DAG product (3-O-(beta-D-glycopyranosyl-(1-&gt;6)-D-galactopyranosyl)-1,2-diacyl-sn-glycerol). It can also use alpha-Gal-beta-Gal-DAG, ceramide (Cer) and beta-Gal-Cer as sugar acceptors. The enzyme is supposed to be mainly a galactosyltransferase, with higher glycosyltransferase activity for the addition of the second glycosyl on beta-Gal-DAG as acceptor. The main glycolipid produced in vivo is beta-Glc-beta-Gal-DAG with a beta-1,6 linkage. This Mycoplasma pneumoniae (strain ATCC 29342 / M129 / Subtype 1) (Mycoplasmoides pneumoniae) protein is Processive diacylglycerol beta-glycosyltransferase.